Consider the following 387-residue polypeptide: Putative ribosomal RNA large subunit methyltransferase MJ1649 (387 aa).

The PUA domain maps to 5–81 (LIKLEIDRRA…EEIDYDFFYK (77 aa)).

It belongs to the methyltransferase superfamily. RlmI family.

The protein localises to the cytoplasm. In Methanocaldococcus jannaschii (strain ATCC 43067 / DSM 2661 / JAL-1 / JCM 10045 / NBRC 100440) (Methanococcus jannaschii), this protein is Putative ribosomal RNA large subunit methyltransferase MJ1649.